We begin with the raw amino-acid sequence, 544 residues long: Chromosomal replication initiator protein DnaA (544 aa).

Residues 1–71 (MNDFWQHCSA…ADMARDFWHT (71 aa)) are domain I, interacts with DnaA modulators. The tract at residues 71–207 (TPIDVQFVLD…GETDSMYERS (137 aa)) is domain II. The span at 90-105 (AAAPAPASARPASAPG) shows a compositional bias: low complexity. Disordered regions lie at residues 90-111 (AAAP…GGSA) and 180-203 (AAAR…TDSM). A compositionally biased stretch (polar residues) spans 191–200 (SAGSNGNGET). Residues 208-424 (KLNPVLTFDN…GALRKILAYS (217 aa)) form a domain III, AAA+ region region. ATP-binding residues include glycine 252, glycine 254, lysine 255, and threonine 256. The interval 425-544 (KFHGREITIE…LHVLEQTLKG (120 aa)) is domain IV, binds dsDNA.

The protein belongs to the DnaA family. As to quaternary structure, oligomerizes as a right-handed, spiral filament on DNA at oriC.

The protein localises to the cytoplasm. Plays an essential role in the initiation and regulation of chromosomal replication. ATP-DnaA binds to the origin of replication (oriC) to initiate formation of the DNA replication initiation complex once per cell cycle. Binds the DnaA box (a 9 base pair repeat at the origin) and separates the double-stranded (ds)DNA. Forms a right-handed helical filament on oriC DNA; dsDNA binds to the exterior of the filament while single-stranded (ss)DNA is stabiized in the filament's interior. The ATP-DnaA-oriC complex binds and stabilizes one strand of the AT-rich DNA unwinding element (DUE), permitting loading of DNA polymerase. After initiation quickly degrades to an ADP-DnaA complex that is not apt for DNA replication. Binds acidic phospholipids. In Paraburkholderia xenovorans (strain LB400), this protein is Chromosomal replication initiator protein DnaA.